We begin with the raw amino-acid sequence, 201 residues long: Recombination protein RecR (201 aa).

The C4-type zinc finger occupies 60–75 (CSCCGNVDTSDPCTIC). One can recognise a Toprim domain in the interval 83 to 178 (TTLIVVEDVS…RVTRLAHGVP (96 aa)).

Belongs to the RecR family.

May play a role in DNA repair. It seems to be involved in an RecBC-independent recombinational process of DNA repair. It may act with RecF and RecO. This chain is Recombination protein RecR, found in Brucella anthropi (strain ATCC 49188 / DSM 6882 / CCUG 24695 / JCM 21032 / LMG 3331 / NBRC 15819 / NCTC 12168 / Alc 37) (Ochrobactrum anthropi).